We begin with the raw amino-acid sequence, 347 residues long: Methionine import ATP-binding protein MetN (347 aa).

Residues 2-247 (ITTTGLTKVY…PGSELASALF (246 aa)) form the ABC transporter domain. 38–45 (GQSGAGKS) provides a ligand contact to ATP.

This sequence belongs to the ABC transporter superfamily. Methionine importer (TC 3.A.1.24) family. As to quaternary structure, the complex is composed of two ATP-binding proteins (MetN), two transmembrane proteins (MetI) and a solute-binding protein (MetQ).

The protein localises to the cell membrane. The enzyme catalyses L-methionine(out) + ATP + H2O = L-methionine(in) + ADP + phosphate + H(+). It catalyses the reaction D-methionine(out) + ATP + H2O = D-methionine(in) + ADP + phosphate + H(+). Functionally, part of the ABC transporter complex MetNIQ involved in methionine import. Responsible for energy coupling to the transport system. The protein is Methionine import ATP-binding protein MetN of Streptomyces avermitilis (strain ATCC 31267 / DSM 46492 / JCM 5070 / NBRC 14893 / NCIMB 12804 / NRRL 8165 / MA-4680).